Reading from the N-terminus, the 94-residue chain is Endoribonuclease VapD 2 (94 aa).

It belongs to the VapD ribonuclease family. As to quaternary structure, homodimer.

Cleaves ssRNA, mostly between U:A. This Riemerella anatipestifer (Moraxella anatipestifer) protein is Endoribonuclease VapD 2.